The primary structure comprises 92 residues: N(2)-fixation sustaining protein CowN (92 aa).

It belongs to the CowN family.

Is required to sustain N(2)-dependent growth in the presence of low levels of carbon monoxide (CO). Probably acts by protecting the N(2) fixation ability of the nitrogenase complex, which is inactivated in the presence of CO. In Rhodopseudomonas palustris (strain BisA53), this protein is N(2)-fixation sustaining protein CowN.